A 379-amino-acid polypeptide reads, in one-letter code: Inactive 2'-5'-oligoadenylate synthase 1B (379 aa).

Residues 1-355 (MEQELRSIPA…VPTEVDIPSQ (355 aa)) lie on the Cytoplasmic side of the membrane. Residues 356–374 (NYFFHIICLIFWLLLRLIF) traverse the membrane as a helical; Anchor for type IV membrane protein segment. Residues 375-379 (GKHSV) are Extracellular-facing.

The protein belongs to the 2-5A synthase family. Interacts with OSBPL1A and ABCF3. Highly expressed in the brain, liver, spleen and heart.

The protein resides in the endoplasmic reticulum membrane. In terms of biological role, does not have 2'-5'-OAS activity, but can bind double-stranded RNA. Displays antiviral activity against viruses via an alternative antiviral pathway independent of RNase L. The protein is Inactive 2'-5'-oligoadenylate synthase 1B (Oas1b) of Rattus norvegicus (Rat).